A 68-amino-acid chain; its full sequence is Large ribosomal subunit protein uL29 (68 aa).

The protein belongs to the universal ribosomal protein uL29 family.

The chain is Large ribosomal subunit protein uL29 (rpl29) from Thermoplasma acidophilum (strain ATCC 25905 / DSM 1728 / JCM 9062 / NBRC 15155 / AMRC-C165).